The following is a 336-amino-acid chain: Galactose/methyl galactoside import permease protein MglC (336 aa).

Residues 1-16 (MSALNKKSFLTYLKEG) are Periplasmic-facing. Residues 17–37 (GIYVVLLVLLAIIIFQDPTFL) form a helical membrane-spanning segment. Residues 38–52 (SLLNLSNILTQSSVR) are Cytoplasmic-facing. Residues 53–73 (IIIALGVAGLIVTQGTDLSAG) form a helical membrane-spanning segment. The Periplasmic portion of the chain corresponds to 74 to 106 (RQVGLAAVVAATLLQSMDNANKVFPEMATMPIA). 2 consecutive transmembrane segments (helical) span residues 107–127 (LVIL…GLII) and 128–148 (AYLN…VYGI). Residues 149 to 180 (NSLYYDFVGASPISGFDSGFSTFAQGFVALGS) are Periplasmic-facing. A helical transmembrane segment spans residues 181 to 201 (FRLSYITFYALIAVAFVWVLW). At 202-226 (NKTRFGKNIFAIGGNPEAAKVSGVN) the chain is on the cytoplasmic side. The helical transmembrane segment at 227–247 (VGLNLLMIYALSGVFYAFGGM) threads the bilayer. Residues 248-256 (LEAGRIGSA) lie on the Periplasmic side of the membrane. Residues 257–277 (TNNLGFMYELDAIAACVVGGV) form a helical membrane-spanning segment. Position 278 (Ser-278) is a topological domain, cytoplasmic. Residues 279-299 (FSGGVGTVIGVVTGVIIFTVI) traverse the membrane as a helical segment. Topologically, residues 300-305 (NYGLTY) are periplasmic. A helical transmembrane segment spans residues 306–326 (IGVNPYWQYIIKGAIIIFAVA). Over 327 to 336 (LDSLKYARKK) the chain is Cytoplasmic.

This sequence belongs to the binding-protein-dependent transport system permease family. AraH/RbsC subfamily. In terms of assembly, the complex is composed of one ATP-binding protein (MglA), two transmembrane proteins (MglC) and a solute-binding protein (MglB).

Its subcellular location is the cell inner membrane. Functionally, part of the ABC transporter complex MglABC involved in galactose/methyl galactoside import. Probably responsible for the translocation of the substrate across the membrane. This Escherichia coli (strain K12) protein is Galactose/methyl galactoside import permease protein MglC (mglC).